We begin with the raw amino-acid sequence, 318 residues long: D-alanine--D-alanine ligase (318 aa).

Residues 116 to 311 (KQVWQSLGIP…FQQLVLAILA (196 aa)) form the ATP-grasp domain. 142 to 197 (STELGFPLIVKPAHEGSSIGMAKVNSAQELVAAWQDAAKYDSQVLVEQWIHGPEFT) contacts ATP. Mg(2+) contacts are provided by Asp-265, Glu-278, and Asn-280.

It belongs to the D-alanine--D-alanine ligase family. The cofactor is Mg(2+). Mn(2+) serves as cofactor.

It is found in the cytoplasm. The enzyme catalyses 2 D-alanine + ATP = D-alanyl-D-alanine + ADP + phosphate + H(+). Its pathway is cell wall biogenesis; peptidoglycan biosynthesis. In terms of biological role, cell wall formation. The polypeptide is D-alanine--D-alanine ligase (Pseudomonas putida (strain GB-1)).